The primary structure comprises 575 residues: Chaperonin 60 subunit alpha 2, chloroplastic (575 aa).

The span at 1-18 (MFAVSPSSFSPTTISPRR) shows a compositional bias: low complexity. Residues 1-27 (MFAVSPSSFSPTTISPRRSGQRNEPRK) are disordered. A chloroplast-targeting transit peptide spans 1 to 32 (MFAVSPSSFSPTTISPRRSGQRNEPRKFSVVR).

The protein belongs to the chaperonin (HSP60) family. Part of the Cpn60 complex composed of 7 alpha and 7 beta subunits.

The protein resides in the plastid. Its subcellular location is the chloroplast. In terms of biological role, involved in protein assisted folding. The sequence is that of Chaperonin 60 subunit alpha 2, chloroplastic (CPN60A2) from Arabidopsis thaliana (Mouse-ear cress).